Reading from the N-terminus, the 156-residue chain is Small ribosomal subunit protein uS17A (156 aa).

S2 carries the N-acetylserine modification. Residues K15, K46, K56, K57, K79, K96, K105, K133, K141, and K148 each participate in a glycyl lysine isopeptide (Lys-Gly) (interchain with G-Cter in ubiquitin) cross-link.

This sequence belongs to the universal ribosomal protein uS17 family. As to quaternary structure, component of the small ribosomal subunit (SSU). Mature yeast ribosomes consist of a small (40S) and a large (60S) subunit. The 40S small subunit contains 1 molecule of ribosomal RNA (18S rRNA) and 33 different proteins (encoded by 57 genes). The large 60S subunit contains 3 rRNA molecules (25S, 5.8S and 5S rRNA) and 46 different proteins (encoded by 81 genes). N-terminally acetylated by acetyltransferase NatA.

It localises to the cytoplasm. Its function is as follows. Component of the ribosome, a large ribonucleoprotein complex responsible for the synthesis of proteins in the cell. The small ribosomal subunit (SSU) binds messenger RNAs (mRNAs) and translates the encoded message by selecting cognate aminoacyl-transfer RNA (tRNA) molecules. The large subunit (LSU) contains the ribosomal catalytic site termed the peptidyl transferase center (PTC), which catalyzes the formation of peptide bonds, thereby polymerizing the amino acids delivered by tRNAs into a polypeptide chain. The nascent polypeptides leave the ribosome through a tunnel in the LSU and interact with protein factors that function in enzymatic processing, targeting, and the membrane insertion of nascent chains at the exit of the ribosomal tunnel. The chain is Small ribosomal subunit protein uS17A from Saccharomyces cerevisiae (strain ATCC 204508 / S288c) (Baker's yeast).